Here is a 737-residue protein sequence, read N- to C-terminus: Disintegrin and metalloproteinase domain-containing protein 2 (737 aa).

Residues 1–18 (MWLLLLLLSGLSRLGGLS) form the signal peptide. Residues 19–180 (EPQTEGTREK…YKIRSIKPQR (162 aa)) constitute a propeptide that is removed on maturation. Over 19–688 (EPQTEGTREK…ASAYRSKSAR (670 aa)) the chain is Extracellular. N-linked (GlcNAc...) asparagine glycans are attached at residues Asn-128 and Asn-226. Residues 184–381 (HYLEIHIVVE…QSSHCLQNQP (198 aa)) enclose the Peptidase M12B domain. Disulfide bonds link Cys-293-Cys-376, Cys-335-Cys-360, Cys-337-Cys-342, and Cys-450-Cys-470. N-linked (GlcNAc...) asparagine glycosylation is found at Asn-359, Asn-464, Asn-491, and Asn-571. In terms of domain architecture, Disintegrin spans 389–478 (MAVCGNGELE…VCEEDFFVQD (90 aa)). The 34-residue stretch at 617 to 650 (LNYDCTPEKCNHHGVCNNKKHCHCEPTYLPPDCK) folds into the EGF-like domain. 3 disulfide bridges follow: Cys-621–Cys-632, Cys-626–Cys-638, and Cys-640–Cys-649. Residues 689–709 (WPFFLIIPFYVVILVLIGMLV) traverse the membrane as a helical segment. The Cytoplasmic segment spans residues 710 to 737 (KVYSQRKKWRMDDFSSEEQFESESESKD). At Ser-731 the chain carries Phosphoserine.

Heterodimer with ADAM1/fertilin subunit alpha. Post-translationally, the prodomain and the metalloprotease domain are cleaved during the epididymal maturation of the spermatozoa.

Its subcellular location is the membrane. In terms of biological role, sperm surface membrane protein that may be involved in sperm-egg plasma membrane adhesion and fusion during fertilization. Could have a direct role in sperm-zona binding or migration of sperm from the uterus into the oviduct. Interactions with egg membrane could be mediated via binding between its disintegrin-like domain to one or more integrins receptors on the egg. This is a non catalytic metalloprotease-like protein. This chain is Disintegrin and metalloproteinase domain-containing protein 2 (Adam2), found in Rattus norvegicus (Rat).